Reading from the N-terminus, the 266-residue chain is Ribosomal RNA small subunit methyltransferase A (266 aa).

Residues asparagine 12, leucine 14, glycine 39, glutamate 61, aspartate 87, and asparagine 107 each coordinate S-adenosyl-L-methionine.

Belongs to the class I-like SAM-binding methyltransferase superfamily. rRNA adenine N(6)-methyltransferase family. RsmA subfamily.

The protein localises to the cytoplasm. It carries out the reaction adenosine(1518)/adenosine(1519) in 16S rRNA + 4 S-adenosyl-L-methionine = N(6)-dimethyladenosine(1518)/N(6)-dimethyladenosine(1519) in 16S rRNA + 4 S-adenosyl-L-homocysteine + 4 H(+). Specifically dimethylates two adjacent adenosines (A1518 and A1519) in the loop of a conserved hairpin near the 3'-end of 16S rRNA in the 30S particle. May play a critical role in biogenesis of 30S subunits. The protein is Ribosomal RNA small subunit methyltransferase A of Nitratidesulfovibrio vulgaris (strain ATCC 29579 / DSM 644 / CCUG 34227 / NCIMB 8303 / VKM B-1760 / Hildenborough) (Desulfovibrio vulgaris).